Reading from the N-terminus, the 115-residue chain is Small ribosomal subunit protein uS14m (115 aa).

The protein belongs to the universal ribosomal protein uS14 family. As to quaternary structure, component of the mitochondrial small ribosomal subunit (mt-SSU). Mature yeast 74S mitochondrial ribosomes consist of a small (37S) and a large (54S) subunit. The 37S small subunit contains a 15S ribosomal RNA (15S mt-rRNA) and 34 different proteins. The 54S large subunit contains a 21S rRNA (21S mt-rRNA) and 46 different proteins.

It is found in the mitochondrion. Its function is as follows. Component of the mitochondrial ribosome (mitoribosome), a dedicated translation machinery responsible for the synthesis of mitochondrial genome-encoded proteins, including at least some of the essential transmembrane subunits of the mitochondrial respiratory chain. The mitoribosomes are attached to the mitochondrial inner membrane and translation products are cotranslationally integrated into the membrane. This Saccharomyces cerevisiae (strain ATCC 204508 / S288c) (Baker's yeast) protein is Small ribosomal subunit protein uS14m (MRP2).